Consider the following 82-residue polypeptide: High-potential iron-sulfur protein (82 aa).

[4Fe-4S] cluster-binding residues include Cys42, Cys45, Cys60, and Cys74.

This sequence belongs to the high-potential iron-sulfur protein (HiPIP) family. Homodimer.

Its subcellular location is the periplasm. Functionally, specific class of high-redox-potential 4Fe-4S ferredoxins. Functions in anaerobic electron transport in most purple and in some other photosynthetic bacteria and in at least one genus (Paracoccus) of halophilic, denitrifying bacteria. The polypeptide is High-potential iron-sulfur protein (hip) (Marichromatium purpuratum (Chromatium purpuratum)).